Here is a 190-residue protein sequence, read N- to C-terminus: Potassium-transporting ATPase KdpC subunit (190 aa).

A helical transmembrane segment spans residues 6–26; the sequence is PAVFLVLLLTLITGLLYPLLT. The segment at 67-88 is disordered; it reads GRPSATSDRPYNPLASSGSNLA. A compositionally biased stretch (polar residues) spans 69–88; that stretch reads PSATSDRPYNPLASSGSNLA.

The protein belongs to the KdpC family. As to quaternary structure, the system is composed of three essential subunits: KdpA, KdpB and KdpC.

The protein localises to the cell inner membrane. Functionally, part of the high-affinity ATP-driven potassium transport (or Kdp) system, which catalyzes the hydrolysis of ATP coupled with the electrogenic transport of potassium into the cytoplasm. This subunit acts as a catalytic chaperone that increases the ATP-binding affinity of the ATP-hydrolyzing subunit KdpB by the formation of a transient KdpB/KdpC/ATP ternary complex. The chain is Potassium-transporting ATPase KdpC subunit from Erwinia tasmaniensis (strain DSM 17950 / CFBP 7177 / CIP 109463 / NCPPB 4357 / Et1/99).